The sequence spans 86 residues: Beta-toxin Tz1 (86 aa).

Positions 1 to 20 (MTRFVLFICCFFLIGMVVEC) are cleaved as a signal peptide. The LCN-type CS-alpha/beta domain occupies 21–83 (KDGYLVGNDG…TWDRATNRCG (63 aa)). 4 disulfides stabilise this stretch: Cys-31/Cys-82, Cys-35/Cys-57, Cys-43/Cys-63, and Cys-47/Cys-65. An Arginine amide modification is found at Arg-84.

It belongs to the long (4 C-C) scorpion toxin superfamily. Sodium channel inhibitor family. Beta subfamily. Expressed by the venom gland.

The protein resides in the secreted. Functionally, beta toxins bind voltage-independently at site-4 of sodium channels (Nav) and shift the voltage of activation toward more negative potentials thereby affecting sodium channel activation and promoting spontaneous and repetitive firing. Strongly affects skeletal muscle channels Nav1.4/SCN4A, poorly affects the neuronal channels Nav1.6/SCN8A and Nav1.2/SCN2A. Induces spastic paralysis of rear limbs, increased salivation, apnea, tachycardia and increased perspiration. The chain is Beta-toxin Tz1 from Tityus zulianus (Venezuelan scorpion).